Consider the following 1022-residue polypeptide: Probable E3 ubiquitin-protein ligase HERC6 (1022 aa).

5 RCC1 repeats span residues 41–92, 93–145, 147–198, 200–253, and 254–304; these read NHRV…AVCH, KGRV…ALSK, SQVF…ALSL, GTSF…VLTQ, and DGKV…AYVH. The 325-residue stretch at 693 to 1017 folds into the HECT domain; that stretch reads EATDFCKVLV…INNNRGFVSP (325 aa). The active-site Glycyl thioester intermediate is Cys985.

Detected in brain, heart, placenta and testis.

Its subcellular location is the cytoplasm. The protein resides in the cytosol. The enzyme catalyses S-ubiquitinyl-[E2 ubiquitin-conjugating enzyme]-L-cysteine + [acceptor protein]-L-lysine = [E2 ubiquitin-conjugating enzyme]-L-cysteine + N(6)-ubiquitinyl-[acceptor protein]-L-lysine.. It participates in protein modification; protein ubiquitination. Functionally, E3 ubiquitin-protein ligase which accepts ubiquitin from an E2 ubiquitin-conjugating enzyme in the form of a thioester and then directly transfers the ubiquitin to targeted substrates. The chain is Probable E3 ubiquitin-protein ligase HERC6 (HERC6) from Homo sapiens (Human).